Consider the following 2278-residue polypeptide: Genome polyprotein (2278 aa).

Residues 454–609 (LESTANSIRS…EDWKKKNPGK (156 aa)) form the SF3 helicase domain. ATP is bound at residue 481 to 488 (GPPGIGKT). Residues 939-958 (EEAKGKTKHGRGAKHARRGG) are disordered. Residues 944 to 956 (KTKHGRGAKHARR) are compositionally biased toward basic residues. Tyr-966 bears the O-(5'-phospho-RNA)-tyrosine mark. One can recognise a Peptidase C24 domain in the interval 1056–1204 (APTPIVTFTS…TKLAQRVTKT (149 aa)). Active-site for 3CLpro activity residues include His-1086, Glu-1107, and Cys-1171. The 126-residue stretch at 1443–1568 (GVLYCLDYSK…SVCPATASIF (126 aa)) folds into the RdRp catalytic domain.

Homodimer. Homomultimer. Post-translationally, specific enzymatic cleavages in vivo yield mature proteins. Pro-Pol is first autocatalytically cleaved, then processes the whole polyprotein. In terms of processing, VPg is uridylylated by the polymerase and is covalently attached to the 5'-end of the polyadenylated genomic and subgenomic RNAs. This uridylylated form acts as a nucleotide-peptide primer for the polymerase.

It localises to the virion. The protein resides in the host cytoplasm. The enzyme catalyses a ribonucleoside 5'-triphosphate + H2O = a ribonucleoside 5'-diphosphate + phosphate + H(+). It carries out the reaction RNA(n) + a ribonucleoside 5'-triphosphate = RNA(n+1) + diphosphate. It catalyses the reaction Endopeptidase with a preference for cleavage when the P1 position is occupied by Glu-|-Xaa and the P1' position is occupied by Gly-|-Yaa.. Together with NTPase and NS4, initiates the formation of the replication complex. Induces the proliferation of the host smooth ER membranes forming long tubular structures. These remodeled membranes probably form the viral factories that contain the replication complex. Functionally, displays NTPase activity, but no helicase activity. Induces the formation of convoluted membranes derived from the host ER. These remodeled membranes probably form the viral factories that contain the replication complex. Together with NS2 and NS4, initiates the formation of the replication complex. In terms of biological role, probable key protein responsible for the formation of membrane alterations by the virus. Induces the formation of convoluted membranes derived from the host ER. These remodeled membranes probably form the viral factories that contain the replication complex. Together with NS2 and NTPase, initiates the formation of the replication complex. Its function is as follows. Viral genome-linked protein is covalently linked to the 5'-end of the positive-strand, negative-strand genomic RNAs and subgenomic RNA. Acts as a genome-linked replication primer. May recruit ribosome to viral RNA thereby promoting viral proteins translation. Interacts with host translation initiation complex to allow the translation of viral proteins. Protease-polymerase p76 processes the polyprotein: Pro-Pol is first released by autocleavage, then all other proteins are cleaved. Cleaves host translation initiation factor eIF4G1, eIF4G2 and PABP1 thereby inducing a shutdown of host protein synthesis. This shutdown may not prevent viral mRNA from being translated since viral Vpg replaces the cap. It is also an RNA-directed RNA polymerase which replicates genomic and antigenomic viral RNA by recognizing specific signals. Also transcribes a subgenomic mRNA by initiating RNA synthesis internally on antigenomic RNA. This sgRNA codes for structural proteins. Catalyzes the covalent attachment VPg with viral RNAs. Functionally, capsid protein self assembles to form an icosahedral capsid with a T=3 symmetry, about 38 nm in diameter, and consisting of 180 capsid proteins. The capsid encapsulate the genomic RNA and VP2 proteins. Attaches virion to target cells, inducing endocytosis of the viral particle. Acidification of the endosome induces conformational change of capsid protein thereby injecting virus genomic RNA into host cytoplasm. This is Genome polyprotein from Homo sapiens (Human).